Consider the following 192-residue polypeptide: 3-hydroxyanthranilate 3,4-dioxygenase (192 aa).

Arg-50 lines the O2 pocket. 3 residues coordinate Fe cation: His-54, Glu-60, and His-102. Glu-60 serves as a coordination point for substrate. Substrate-binding residues include Arg-106 and Glu-116. 4 residues coordinate a divalent metal cation: Cys-131, Cys-134, Cys-168, and Cys-171.

The protein belongs to the 3-HAO family. It depends on Fe(2+) as a cofactor.

Its subcellular location is the cytoplasm. It carries out the reaction 3-hydroxyanthranilate + O2 = (2Z,4Z)-2-amino-3-carboxymuconate 6-semialdehyde. The protein operates within cofactor biosynthesis; NAD(+) biosynthesis; quinolinate from L-kynurenine: step 3/3. Catalyzes the oxidative ring opening of 3-hydroxyanthranilate to 2-amino-3-carboxymuconate semialdehyde, which spontaneously cyclizes to quinolinate. The chain is 3-hydroxyanthranilate 3,4-dioxygenase (bna1) from Neosartorya fischeri (strain ATCC 1020 / DSM 3700 / CBS 544.65 / FGSC A1164 / JCM 1740 / NRRL 181 / WB 181) (Aspergillus fischerianus).